The chain runs to 429 residues: ATP-sensitive inward rectifier potassium channel 12 (429 aa).

Topologically, residues 1-76 (MTAGRVNPYS…IADMFTTCVD (76 aa)) are cytoplasmic. A helical transmembrane segment spans residues 77–103 (IRWRYMLLLFSLAFLVSWLLFGLIFWL). Positions 78 and 80 each coordinate a 1,2-diacyl-sn-glycero-3-phospho-(1D-myo-inositol-4,5-bisphosphate). At 104–129 (IALIHGDLENPGGDDTFKPCVLQVNG) the chain is on the extracellular side. Cys123 and Cys155 are oxidised to a cystine. An intramembrane region (helical; Pore-forming) is located at residues 130-146 (FVAAFLFSIETQTTIGY). K(+)-binding residues include Thr143, Ile144, Gly145, and Tyr146. The short motif at 143 to 148 (TIGYGF) is the Selectivity filter element. Topologically, residues 147–155 (GFRCVTEEC) are extracellular. Residues 156–183 (PLAVFMVVVQSIVGCIIDSFMIGAIMAK) traverse the membrane as a helical segment. Positions 183 and 188 each coordinate a 1,2-diacyl-sn-glycero-3-phospho-(1D-myo-inositol-4,5-bisphosphate). Topologically, residues 184-429 (MARPKKRAQT…QRSYRRESEI (246 aa)) are cytoplasmic. The tract at residues 386 to 407 (RDEDEEDDDSRGLDDLSPDNRH) is disordered. Residues 395–407 (SRGLDDLSPDNRH) are compositionally biased toward basic and acidic residues.

It belongs to the inward rectifier-type potassium channel family. As to quaternary structure, homotetramer.

It localises to the membrane. The protein resides in the cell membrane. The protein localises to the sarcolemma. It is found in the T-tubule. It carries out the reaction K(+)(in) = K(+)(out). With respect to regulation, activated by phosphatidylinositol 4,5-bisphosphate (PtdIns(4,5)P2). PtdIns(4,5)P2 binding to the cytoplasmic side of the channel triggers a conformation change leading to channel opening. Inward rectifying potassium channel that probably participates in controlling the resting membrane potential in electrically excitable cells. Probably participates in establishing action potential waveform and excitability of neuronal and muscle tissues. Inward rectifier potassium channels are characterized by a greater tendency to allow potassium to flow into the cell rather than out of it. Their voltage dependence is regulated by the concentration of extracellular potassium; as external potassium is raised, the voltage range of the channel opening shifts to more positive voltages. The inward rectification is mainly due to the blockage of outward current by internal magnesium. In Gallus gallus (Chicken), this protein is ATP-sensitive inward rectifier potassium channel 12 (KCNJ12).